Here is a 706-residue protein sequence, read N- to C-terminus: MSGGDTRAAIARPRMAAAHGPVAPSSPEQVTLLPVQRSFFLPPFSGATPSTSLAESVLKVWHGAYNSGLLPQLMAQHSLAMAQNGAVPSEATKRDQNLKRGNWGNQIEFVLTSVGYAVGLGNVWRFPYLCYRNGGGAFMFPYFIMLIFCGIPLFFMELSFGQFASQGCLGVWRISPMFKGVGYGMMVVSTYIGIYYNVVICIAFYYFFSSMTHVLPWAYCNNPWNTHDCAGVLDASNLTNGSRPAALPSNLSHLLNHSLQRTSPSEEYWRLYVLKLSDDIGNFGEVRLPLLGCLGVSWLVVFLCLIRGVKSSGKVVYFTATFPYVVLTILFVRGVTLEGAFDGIMYYLTPQWDKILEAKVWGDAASQIFYSLGCAWGGLITMASYNKFHNNCYRDSVIISITNCATSVYAGFVIFSILGFMANHLGVDVSRVADHGPGLAFVAYPEALTLLPISPLWSLLFFFMLILLGLGTQFCLLETLVTAIVDEVGNEWILQKKTYVTLGVAVAGFLLGIPLTSQAGIYWLLLMDNYAASFSLVVISCIMCVAIMYIYGHRNYFQDIQMMLGFPPPLFFQICWRFVSPAIIFFILVFTVIQYQPITYNHYQYPGWAVAIGFLMALSSVLCIPLYAMFRLCRTDGDTLLQRLKNATKPSRDWGPALLEHRTGRYAPTIAPSPEDGFEVQPLHPDKAQIPIVGSNGSSRLQDSRI.

The disordered stretch occupies residues 1–26 (MSGGDTRAAIARPRMAAAHGPVAPSS). At 1 to 108 (MSGGDTRAAI…KRGNWGNQIE (108 aa)) the chain is on the cytoplasmic side. A compositionally biased stretch (low complexity) spans 7–18 (RAAIARPRMAAA). 3 helical membrane passes run 109 to 129 (FVLT…FPYL), 136 to 156 (GAFM…LFFM), and 188 to 208 (VSTY…YYFF). Over 209-285 (SSMTHVLPWA…LSDDIGNFGE (77 aa)) the chain is Extracellular. The next 9 helical transmembrane spans lie at 286–306 (VRLP…LCLI), 315–335 (VVYF…VRGV), 360–380 (VWGD…GGLI), 407–427 (SVYA…HLGV), 450–470 (LLPI…LLGL), 506–526 (VAGF…WLLL), 530–550 (YAAS…IMYI), 570–590 (LFFQ…ILVF), and 610–630 (VAIG…YAMF). The Cytoplasmic portion of the chain corresponds to 631–706 (RLCRTDGDTL…GSSRLQDSRI (76 aa)). 2 positions are modified to phosphoserine: serine 673 and serine 698. Positions 695–706 (SNGSSRLQDSRI) are essential for interaction with EXOC1.

Belongs to the sodium:neurotransmitter symporter (SNF) (TC 2.A.22) family. SLC6A9 subfamily. As to quaternary structure, interacts with EXOC1; interaction increases the transporter capacity of SLC6A9 probably by promoting its insertion into the cell membrane. Interacts with EXOC3 and EXOC4. As to expression, expressed in the brain, kidney, pancreas, lung, placenta and liver. In terms of tissue distribution, expressed only in the brain.

Its subcellular location is the cell membrane. It catalyses the reaction glycine(out) + chloride(out) + 2 Na(+)(out) = glycine(in) + chloride(in) + 2 Na(+)(in). Its activity is regulated as follows. Inhibited by sarcosine. Sodium- and chloride-dependent glycine transporter. Essential for regulating glycine concentrations at inhibitory glycinergic synapses. Its function is as follows. Sodium- and chloride-dependent glycine transporter. This is Sodium- and chloride-dependent glycine transporter 1 (SLC6A9) from Homo sapiens (Human).